The chain runs to 501 residues: Glucose-6-phosphate exchanger SLC37A2 (501 aa).

Residues 19 to 39 (SWFRGFILLLTFLIYACYHMS) form a helical membrane-spanning segment. N-linked (GlcNAc...) asparagine glycans are attached at residues asparagine 53, asparagine 62, and asparagine 68. Helical transmembrane passes span 88–108 (GAVD…SGIF), 118–140 (LSAG…FWNI), 142–164 (MLWY…WPSV), 179–199 (FIMG…SLIA), and 210–230 (SFIV…LFLI). Positions 240-252 (PPRHHDDPEKEQD) are enriched in basic and acidic residues. Residues 240 to 266 (PPRHHDDPEKEQDNPEDPVNSPYSSRE) are disordered. 6 helical membrane passes run 303–323 (CLLF…LYIF), 334–354 (GDLS…AGLI), 362–382 (ATTC…YNYI), 391–411 (IVML…ITTA), 434–454 (AIID…AGLI), and 462–482 (VFYM…RLVY).

It belongs to the major facilitator superfamily. Organophosphate:Pi antiporter (OPA) (TC 2.A.1.4) family. In terms of tissue distribution, highly expressed in bone marrow derived macrophages, and weakly in spleen.

It is found in the endoplasmic reticulum membrane. The catalysed reaction is D-glucose 6-phosphate(in) + phosphate(out) = D-glucose 6-phosphate(out) + phosphate(in). Its activity is regulated as follows. Inhibited by vanadate but not by chlorogenic acid. Inorganic phosphate and glucose-6-phosphate antiporter. May transport cytoplasmic glucose-6-phosphate into the lumen of the endoplasmic reticulum and translocate inorganic phosphate into the opposite direction. Independent of a lumenal glucose-6-phosphatase. May not play a role in homeostatic regulation of blood glucose levels. The protein is Glucose-6-phosphate exchanger SLC37A2 of Mus musculus (Mouse).